The chain runs to 366 residues: 2-oxoglutarate synthase subunit KorA (366 aa).

Heterotetramer of the KorA, KorB, KorC and KorD subunits.

It catalyses the reaction 2 oxidized [2Fe-2S]-[ferredoxin] + 2-oxoglutarate + CoA = succinyl-CoA + 2 reduced [2Fe-2S]-[ferredoxin] + CO2 + H(+). The protein is 2-oxoglutarate synthase subunit KorA (korA) of Methanocaldococcus jannaschii (strain ATCC 43067 / DSM 2661 / JAL-1 / JCM 10045 / NBRC 100440) (Methanococcus jannaschii).